The chain runs to 235 residues: Carboxymethylenebutenolidase 2 (235 aa).

Catalysis depends on residues Cys-117, Asp-173, and His-204.

It belongs to the dienelactone hydrolase family. Monomer.

It catalyses the reaction 2-(5-oxo-2,5-dihydrofuran-2-ylidene)acetate + H2O = 4-oxohex-2-enedioate + H(+). The protein operates within aromatic compound metabolism; 3-chlorocatechol degradation. Functionally, ring cleavage of cyclic ester dienelactone to produce maleylacetate. The protein is Carboxymethylenebutenolidase 2 (tfdEII) of Cupriavidus pinatubonensis (strain JMP 134 / LMG 1197) (Cupriavidus necator (strain JMP 134)).